Here is a 686-residue protein sequence, read N- to C-terminus: Endonuclease GajA (686 aa).

The interval 1–423 is ATPase domain; the sequence is MYLKSLKIYN…NYVTTKNNYT (423 aa). 52–56 contacts ATP; sequence NCGKT. A toprim domain region spans residues 463 to 599; sequence FFSDAIIFVE…TSFEEAFILT (137 aa). A divalent metal cation contacts are provided by glutamate 472, glutamate 476, aspartate 559, and glutamate 604.

In terms of assembly, homotetramer. Forms the core of the anti-phage defense complex. Interacts with GajB; 2 GajB dimers dock at opposite sides of the GajA complex to form a 4:4 GajA-GajB assembly (GajAB). GajAB interacts with Bacillus phage Phi3T Gad1 protein; this interaction forms a 4:4:8 GajAB-Gad1 complex and leads to GajAB inhibition. Mg(2+) serves as cofactor.

Functionally, component of antiviral defense system Gabija type II, composed of GajA and GajB. Probably a nicking endonuclease that is strongly inhibited by physiological levels of nucleotides (NTP and dNTP). Expression of Gabija type II in B.subtilis (strain BEST7003) confers resistance to phages phi105, and SpBeta. During viral replication, when nucleotides are rapidly consumed, it is de-suppressed and degrades target DNA. The polypeptide is Endonuclease GajA (Bacillus cereus (strain HuB5-5)).